Reading from the N-terminus, the 37-residue chain is MLNFSLCLYPVFILNKLVLRTQSIILHTINNASIKNR.

The signal sequence occupies residues 1 to 23 (MLNFSLCLYPVFILNKLVLRTQS).

This sequence belongs to the orthopoxviruses VACWR204.5 protein family.

This is an uncharacterized protein from Vaccinia virus (strain Western Reserve) (VACV).